A 1573-amino-acid chain; its full sequence is MSSLLERLHSKYSQNRPWPETIKLVRQIMEKRTGMMSGSHQHLVSCLETLQKALKVSSLSAMTDRLESIARQNGLTSHLSPNGTECYITTDMFYLEVLLDTEGQLCDVKVAHHRENPVSCPELVEQLREKNFEDFSQHLKGLVNLYKVPGDNKLETKMYLALQSLELDLTKMAAMYWQATNASVLEKILHGTVGYLTPRSGGQVMSLKYYVSPYDLFDDTTGASISLSEGHAVPRSLGMNVSVTIEATSAMYKLPIAPLIMGSHPIDNKGTPSFTSITNANSVDLPACFFLKFPQPIPVSRAFIQKIQHCTGIPLIDGSHTFLPHYELVTQFELAKEKEPGTLNHNMRFYASLPGQQHCYFVNKDAPLPDGRSLQGTLLSKIPFQHPGRVPIILSLIRHQVACNTLIGSCVKRTMLKEDCPGLLQFEVAPLSDSCFSISFQHPVNDSLVCVVMDVQDSSHVSCKLYKGLSDALICTDDFITKVVQRCMSIPVTMRAIRRKAETIQADTPALSLIAETVEDMVKKNLPPASSPGYGMASGSTALSGITTPTSSYTSGQISSLFNMGIKERHDSAGHGDDFSKVTQNPILTSLLQITSNSGGTLGSSPTPPQHTPPPASSPASNTKNHPMLMNLLKDNPAQDFSTLYGGSPLERQNSSGSPRTELGSSASGKPKKKRPRTGTEKMKNQTEDDFQRELFSMDVDSQNTIFDVGMAGDALDTPHITPAPSQCGTPPNVYQQAIPHTQANMQRMVRIPSTDAIIPDVTDILSDIAEEASKLPGPGEDCPNLGTPVRDSSSSGHSQSTLFDTDVFQVDGGGGSGGENPYPDPVDLIVDSHGSPNSDSPNTFFNSVDFNPDLLNSQSQSGFTDDLNDDSSQSGDNDFKDFAGPGLASLGIVSGLPVDGGDGKYKMALGADTVDFSIIAGGGSKNLGGPDIQETQSRSQSPLLGSDLGKDRPQKQKVKESGNGGGAGGGLSGMQSAGMEGKSMKRSRTPSSDGKSKDKPPKRKKTESDGKSPSHITNRPFTPPTSTGGSKSPGTSGRSQTPPGMATPPIPKITIQIPKGTMSVGKPSSHSQYSSSGSSSSSSSKSHHGHSSLSSSASGKIKSNKSDGSSGMKIGSSGGGMYSGQSGQSNSQSKNSSQSMGKAGSSPITKHGLSSNVNNSSGSKTKPQGKPSVLMNPSLSKPNISPSHSRPSGGSDKLSSPMKPMPGTPPSSKAKSPIGSGGQHLSGSGSNSTTKSSSGLVSSGSLTQKPNSSSSSSSSSSSSSSSSSSSSSSFSSGVSQNLHSSSKGKSPSRNKKPSLTAVIDKLKHGVGTGGPGSEDPMDGGVGGGSTGAPSHGMSSKHGLGVGEFPTKREKGEKDKSKGSSGGPSDPSKKGGGDSKGSVSTGVAKIIISKHDGGSPSIKAKVTLQKPEGGGEGLRSQMQKNYGSPLISGSTPKHERCSPSHNKSPAYTPQALDSESESGSSSIAEKSYQNSPSSDDGGGSGSRAQTEYSAEKHKKHKKEKKRLKDKDRDREKKKSYTMKPESWSKSPISADPTMAMGGGAMMSSDRASRPTPSFLMGDDDDLIDVPLTL.

The LXXLL motif 1 signature appears at 588 to 592 (LTSLL). 3 disordered regions span residues 595–691 (TSNS…EDDF), 774–883 (SKLP…FKDF), and 928–1564 (LGGP…GDDD). Over residues 606 to 617 (PTPPQHTPPPAS) the composition is skewed to pro residues. An LXXLL motif 2 motif is present at residues 629-633 (LMNLL). The segment covering 651–668 (ERQNSSGSPRTELGSSAS) has biased composition (polar residues). The span at 678 to 691 (TGTEKMKNQTEDDF) shows a compositional bias: basic and acidic residues. Polar residues-rich tracts occupy residues 791–804 (RDSSSSGHSQSTLF), 835–864 (GSPNSDSPNTFFNSVDFNPDLLNSQSQSGF), and 934–944 (QETQSRSQSPL). The segment covering 949 to 961 (LGKDRPQKQKVKE) has biased composition (basic and acidic residues). A compositionally biased stretch (gly residues) spans 963–973 (GNGGGAGGGLS). Composition is skewed to low complexity over residues 1025–1038 (PTSTGGSKSPGTSG), 1053–1085 (KITIQIPKGTMSVGKPSSHSQYSSSGSSSSSSS), 1092–1116 (SSLSSSASGKIKSNKSDGSSGMKIG), 1124–1143 (SGQSGQSNSQSKNSSQSMGK), and 1155–1164 (SSNVNNSSGS). Polar residues predominate over residues 1176–1193 (MNPSLSKPNISPSHSRPS). Residues 1226–1277 (LSGSGSNSTTKSSSGLVSSGSLTQKPNSSSSSSSSSSSSSSSSSSSSSSFSS) are compositionally biased toward low complexity. A compositionally biased stretch (polar residues) spans 1278–1290 (GVSQNLHSSSKGK). The segment covering 1350-1362 (PTKREKGEKDKSK) has biased composition (basic and acidic residues). 2 stretches are compositionally biased toward polar residues: residues 1420–1435 (SQMQKNYGSPLISGST) and 1443–1457 (PSHNKSPAYTPQALD). Low complexity predominate over residues 1461–1471 (ESGSSSIAEKS). Over residues 1496 to 1505 (KHKKHKKEKK) the composition is skewed to basic residues. Positions 1506–1518 (RLKDKDRDREKKK) are enriched in basic and acidic residues.

This sequence belongs to the Mediator complex subunit 1 family. In terms of assembly, component of the Mediator complex.

The protein localises to the nucleus. Its function is as follows. Component of the Mediator complex, a coactivator involved in the regulated transcription of nearly all RNA polymerase II-dependent genes. Mediator functions as a bridge to convey information from gene-specific regulatory proteins to the basal RNA polymerase II transcription machinery. Mediator is recruited to promoters by direct interactions with regulatory proteins and serves as a scaffold for the assembly of a functional preinitiation complex with RNA polymerase II and the general transcription factors. This chain is Mediator of RNA polymerase II transcription subunit 1 (med1), found in Xenopus tropicalis (Western clawed frog).